The sequence spans 955 residues: Reversion-inducing cysteine-rich protein with Kazal motifs (955 aa).

The N-terminal stretch at 1-22 is a signal peptide; that stretch reads MSGCLQILTVLLCCRFWALVFS. Residues 28 to 75 form a Knot 1 repeat; it reads CVHHAADIPRCRDACEQLASIRSESRLRHLLHRLPSYCPETLSELWIC. Positions 28-326 are 5 X Knot repeats; sequence CVHHAADIPR…NPVEMDLITC (299 aa). Residue Asn-77 is glycosylated (N-linked (GlcNAc...) asparagine). Knot repeat units lie at residues 95–132 and 142–188; these read CCEL…LYSC and CCSY…LILC. Residue Asn-191 is glycosylated (N-linked (GlcNAc...) asparagine). 2 Knot repeats span residues 207 to 254 and 282 to 326; these read CCDR…LWQC and CCFK…LITC. Asn-287 and Asn-375 each carry an N-linked (GlcNAc...) asparagine glycan. Kazal-like domains lie at 615-661, 686-741, and 742-778; these read LFTG…SCRS, DLSE…HCQD, and ACRR…RCHA. Disulfide bonds link Cys-621–Cys-646, Cys-623–Cys-642, Cys-631–Cys-659, Cys-704–Cys-724, and Cys-713–Cys-739. Residue Ser-931 is the site of GPI-anchor amidated serine attachment. Residues 932-955 constitute a propeptide that is removed on maturation; sequence SCVSISVCVLLLLCSLILTLTSDL.

This sequence belongs to the RECK family. Interacts (via knot repeats) with wnt7a (via disordered linker region); the interaction is direct. Interacts (via knot repeats) with wnt7b (via disordered linker region); the interaction is direct. Interacts with adgra2; the interaction is direct. As to expression, expressed in the cerebral endothelium.

The protein localises to the cell membrane. Functions together with adgra2 to enable brain endothelial cells to selectively respond to Wnt7 signals (wnt7a or wnt7b). Plays a key role in Wnt7-specific responses: required for central nervous system (CNS) angiogenesis and blood-brain barrier regulation. Acts as a Wnt7-specific coactivator of canonical Wnt signaling by decoding Wnt ligands: acts by interacting specifically with the disordered linker region of Wnt7, thereby conferring ligand selectivity for Wnt7. Adgra2 is then required to deliver reck-bound Wnt7 to frizzled by assembling a higher-order RECK-ADGRA2-Fzd-LRP5-LRP6 complex. Also acts as a serine protease inhibitor. The polypeptide is Reversion-inducing cysteine-rich protein with Kazal motifs (Danio rerio (Zebrafish)).